Reading from the N-terminus, the 274-residue chain is Large ribosomal subunit protein uL2 (274 aa).

The interval 223–265 (VVMNPVDHPHGGGEGRTSGGRHPVSPWGVPTKGYKTRSNKRTD) is disordered.

Belongs to the universal ribosomal protein uL2 family. Part of the 50S ribosomal subunit. Forms a bridge to the 30S subunit in the 70S ribosome.

Its function is as follows. One of the primary rRNA binding proteins. Required for association of the 30S and 50S subunits to form the 70S ribosome, for tRNA binding and peptide bond formation. It has been suggested to have peptidyltransferase activity; this is somewhat controversial. Makes several contacts with the 16S rRNA in the 70S ribosome. In Vibrio vulnificus (strain CMCP6), this protein is Large ribosomal subunit protein uL2.